Reading from the N-terminus, the 60-residue chain is Large ribosomal subunit protein uL30 (60 aa).

It belongs to the universal ribosomal protein uL30 family. In terms of assembly, part of the 50S ribosomal subunit.

This chain is Large ribosomal subunit protein uL30, found in Polaromonas naphthalenivorans (strain CJ2).